Here is a 132-residue protein sequence, read N- to C-terminus: Monothiol glutaredoxin-S9 (132 aa).

The tract at residues A16–V38 is disordered. The region spanning E35 to W131 is the Glutaredoxin domain. [2Fe-2S] cluster is bound at residue C55. The Responsive for interaction with TGA factors motif lies at A129–L132.

This sequence belongs to the glutaredoxin family. CC-type subfamily.

It is found in the cytoplasm. Its subcellular location is the nucleus. In terms of biological role, may only reduce GSH-thiol disulfides, but not protein disulfides. The chain is Monothiol glutaredoxin-S9 (GRXS9) from Oryza sativa subsp. japonica (Rice).